A 93-amino-acid polypeptide reads, in one-letter code: Small ribosomal subunit protein uS19 (93 aa).

Residues Glu-73–Arg-93 are disordered. Residues His-83–Arg-93 show a composition bias toward basic and acidic residues.

Belongs to the universal ribosomal protein uS19 family.

Functionally, protein S19 forms a complex with S13 that binds strongly to the 16S ribosomal RNA. The protein is Small ribosomal subunit protein uS19 of Streptomyces avermitilis (strain ATCC 31267 / DSM 46492 / JCM 5070 / NBRC 14893 / NCIMB 12804 / NRRL 8165 / MA-4680).